Reading from the N-terminus, the 226-residue chain is Protein-L-isoaspartate O-methyltransferase (226 aa).

Ser-75 is an active-site residue.

This sequence belongs to the methyltransferase superfamily. L-isoaspartyl/D-aspartyl protein methyltransferase family.

It localises to the cytoplasm. The catalysed reaction is [protein]-L-isoaspartate + S-adenosyl-L-methionine = [protein]-L-isoaspartate alpha-methyl ester + S-adenosyl-L-homocysteine. Catalyzes the methyl esterification of L-isoaspartyl residues in peptides and proteins that result from spontaneous decomposition of normal L-aspartyl and L-asparaginyl residues. It plays a role in the repair and/or degradation of damaged proteins. The protein is Protein-L-isoaspartate O-methyltransferase of Lawsonia intracellularis (strain PHE/MN1-00).